Here is a 293-residue protein sequence, read N- to C-terminus: 3-methyl-2-oxobutanoate hydroxymethyltransferase (293 aa).

The disordered stretch occupies residues Met1–Pro26. Positions 68 and 111 each coordinate Mg(2+). 3-methyl-2-oxobutanoate is bound by residues Asp68–Ser69, Asp111, and Lys140. Position 142 (Glu142) interacts with Mg(2+). Glu209 acts as the Proton acceptor in catalysis.

This sequence belongs to the PanB family. As to quaternary structure, homodecamer; pentamer of dimers. It depends on Mg(2+) as a cofactor.

Its subcellular location is the cytoplasm. The enzyme catalyses 3-methyl-2-oxobutanoate + (6R)-5,10-methylene-5,6,7,8-tetrahydrofolate + H2O = 2-dehydropantoate + (6S)-5,6,7,8-tetrahydrofolate. It functions in the pathway cofactor biosynthesis; (R)-pantothenate biosynthesis; (R)-pantoate from 3-methyl-2-oxobutanoate: step 1/2. In terms of biological role, catalyzes the reversible reaction in which hydroxymethyl group from 5,10-methylenetetrahydrofolate is transferred onto alpha-ketoisovalerate to form ketopantoate. This Delftia acidovorans (strain DSM 14801 / SPH-1) protein is 3-methyl-2-oxobutanoate hydroxymethyltransferase.